A 95-amino-acid chain; its full sequence is Fatty acid-binding protein, liver (95 aa).

An N6-succinyllysine mark is found at Lys-13 and Lys-18. Position 21 is a phosphoserine (Ser-21). Lys-28 bears the N6-succinyllysine mark. Phosphothreonine is present on Thr-33. Residue Ser-38 is modified to Phosphoserine. An N6-succinyllysine mark is found at Lys-39, Lys-47, and Lys-59. Ser-69 is subject to Phosphoserine. At Lys-90 the chain carries N6-succinyllysine.

Belongs to the calycin superfamily. Fatty-acid binding protein (FABP) family. Monomer.

The protein localises to the cytoplasm. This protein binds free fatty acids and their coenzyme A derivatives, bilirubin, and some other small molecules in the cytoplasm; it may be involved in intracellular lipid transport. The sequence is that of Fatty acid-binding protein, liver (FABP1) from Chaetophractus villosus (South American armadillo).